A 568-amino-acid chain; its full sequence is Glucose-6-phosphate isomerase, cytosolic 1 (568 aa).

Glutamate 360 serves as the catalytic Proton donor. Catalysis depends on residues histidine 391 and lysine 516.

The protein belongs to the GPI family. In terms of assembly, homodimer.

It is found in the cytoplasm. It catalyses the reaction alpha-D-glucose 6-phosphate = beta-D-fructose 6-phosphate. Its pathway is carbohydrate degradation; glycolysis; D-glyceraldehyde 3-phosphate and glycerone phosphate from D-glucose: step 2/4. This chain is Glucose-6-phosphate isomerase, cytosolic 1 (PGIC1), found in Clarkia williamsonii.